Here is a 143-residue protein sequence, read N- to C-terminus: Nucleoside diphosphate kinase (143 aa).

Positions 11, 59, 87, 93, 104, and 114 each coordinate ATP. H117 serves as the catalytic Pros-phosphohistidine intermediate.

It belongs to the NDK family. As to quaternary structure, homotetramer. Requires Mg(2+) as cofactor.

It is found in the cytoplasm. It catalyses the reaction a 2'-deoxyribonucleoside 5'-diphosphate + ATP = a 2'-deoxyribonucleoside 5'-triphosphate + ADP. It carries out the reaction a ribonucleoside 5'-diphosphate + ATP = a ribonucleoside 5'-triphosphate + ADP. Its function is as follows. Major role in the synthesis of nucleoside triphosphates other than ATP. The ATP gamma phosphate is transferred to the NDP beta phosphate via a ping-pong mechanism, using a phosphorylated active-site intermediate. The polypeptide is Nucleoside diphosphate kinase (Shewanella sp. (strain ANA-3)).